Consider the following 192-residue polypeptide: Large ribosomal subunit protein uL5 (192 aa).

It belongs to the universal ribosomal protein uL5 family. Part of the 50S ribosomal subunit; part of the 5S rRNA/L5/L18/L25 subcomplex. Contacts the 5S rRNA and the P site tRNA. Forms a bridge to the 30S subunit in the 70S ribosome.

This is one of the proteins that bind and probably mediate the attachment of the 5S RNA into the large ribosomal subunit, where it forms part of the central protuberance. In the 70S ribosome it contacts protein S13 of the 30S subunit (bridge B1b), connecting the 2 subunits; this bridge is implicated in subunit movement. Contacts the P site tRNA; the 5S rRNA and some of its associated proteins might help stabilize positioning of ribosome-bound tRNAs. This chain is Large ribosomal subunit protein uL5, found in Paenarthrobacter aurescens (strain TC1).